Here is an 88-residue protein sequence, read N- to C-terminus: Large ribosomal subunit protein bL31B (88 aa).

This sequence belongs to the bacterial ribosomal protein bL31 family. Type B subfamily. In terms of assembly, part of the 50S ribosomal subunit.

This is Large ribosomal subunit protein bL31B from Glaesserella parasuis serovar 5 (strain SH0165) (Haemophilus parasuis).